The primary structure comprises 525 residues: Mannuronan C5-epimerase AlgG (525 aa).

A signal peptide spans 1-29 (MNVQRKLASTQLKPVLLGVLLATSAWSQA). PbH1 repeat units lie at residues 287–309 (ADDV…DPHD), 311–334 (SERL…IVSR), 336–358 (VNNS…VLDR), 360–382 (SEHN…TLYE), and 383–405 (SSNN…RMRN). His308 acts as the Proton acceptor in catalysis.

This sequence belongs to the D-mannuronate C5-epimerase family.

Its subcellular location is the periplasm. The enzyme catalyses [(1-&gt;4)-beta-D-mannuronosyl](n) = [alginate](n). Its pathway is glycan biosynthesis; alginate biosynthesis. Its activity is regulated as follows. Inhibited by zinc. Its function is as follows. Catalyzes the epimerization of beta-D-mannuronate to alpha-L-guluronate during the synthesis of the linear polysaccharide alginate. In addition, is part of a periplasmic protein complex that protects alginate from degradation by AlgL by channeling the newly formed alginate polymer through a scaffold that transfers the alginate polymer through the periplasmic space to the outer membrane secretin AlgE. The chain is Mannuronan C5-epimerase AlgG from Azotobacter vinelandii.